A 207-amino-acid polypeptide reads, in one-letter code: ATP-dependent Clp protease proteolytic subunit 1 (207 aa).

The active-site Nucleophile is S103. Residue H128 is part of the active site.

Belongs to the peptidase S14 family. As to quaternary structure, fourteen ClpP subunits assemble into 2 heptameric rings which stack back to back to give a disk-like structure with a central cavity, resembling the structure of eukaryotic proteasomes.

The protein localises to the cytoplasm. The enzyme catalyses Hydrolysis of proteins to small peptides in the presence of ATP and magnesium. alpha-casein is the usual test substrate. In the absence of ATP, only oligopeptides shorter than five residues are hydrolyzed (such as succinyl-Leu-Tyr-|-NHMec, and Leu-Tyr-Leu-|-Tyr-Trp, in which cleavage of the -Tyr-|-Leu- and -Tyr-|-Trp bonds also occurs).. In terms of biological role, cleaves peptides in various proteins in a process that requires ATP hydrolysis. Has a chymotrypsin-like activity. Plays a major role in the degradation of misfolded proteins. In Tropheryma whipplei (strain Twist) (Whipple's bacillus), this protein is ATP-dependent Clp protease proteolytic subunit 1.